The following is a 418-amino-acid chain: MIFDKDDFKAYDADLWNAIAKEEERQQNNIELIASENVVSKAVMAAQGSILTNKYAEGYPGRRYYGGTDVVDVVETLAIERAKEIFGAKFANVQPHSGSQANCAAYMSLIEPGDTVMGMDLASGGHLTHGAPVSFSGQTYNFVSYSVDPETELLDFDAILKQAQEVKPKLIVAGASAYSQIIDFSKFREIADAVGAKLMVDMAHIAGLVAAGLHPSPVPYAHITTTTTHKTLRGPRGGLILTNDEELAKKINSAIFPGIQGGPLEHVVAAKAVSFKEVLDPAFKEYAANVIKNSKAMADVFLQDPDFRIISGGTENHLFLVDVTKVVENGKVAQNLLDEVNITLNKNSIPYESLSPFKTSGIRIGAAAITARGFGEEESRKVAELIIKTLKNSENEAVLEEVRSAVKELTDAFLLYED.

Residues Leu121 and 125–127 each bind (6S)-5,6,7,8-tetrahydrofolate; that span reads GHL. Residue Lys230 is modified to N6-(pyridoxal phosphate)lysine. Residues Glu246 and 355-357 each bind (6S)-5,6,7,8-tetrahydrofolate; that span reads SPF.

It belongs to the SHMT family. Homodimer. It depends on pyridoxal 5'-phosphate as a cofactor.

The protein localises to the cytoplasm. It catalyses the reaction (6R)-5,10-methylene-5,6,7,8-tetrahydrofolate + glycine + H2O = (6S)-5,6,7,8-tetrahydrofolate + L-serine. The protein operates within one-carbon metabolism; tetrahydrofolate interconversion. It functions in the pathway amino-acid biosynthesis; glycine biosynthesis; glycine from L-serine: step 1/1. Its function is as follows. Catalyzes the reversible interconversion of serine and glycine with tetrahydrofolate (THF) serving as the one-carbon carrier. This reaction serves as the major source of one-carbon groups required for the biosynthesis of purines, thymidylate, methionine, and other important biomolecules. Also exhibits THF-independent aldolase activity toward beta-hydroxyamino acids, producing glycine and aldehydes, via a retro-aldol mechanism. The protein is Serine hydroxymethyltransferase of Streptococcus pneumoniae (strain ATCC 700669 / Spain 23F-1).